Reading from the N-terminus, the 738-residue chain is Conserved oligomeric Golgi complex subunit 4 (738 aa).

The protein belongs to the COG4 family. In terms of assembly, component of the conserved oligomeric Golgi complex which is composed of eight different subunits and is required for normal Golgi morphology and localization. Interacts with COG2 and COG3.

Its subcellular location is the golgi apparatus membrane. Required for normal Golgi function. The sequence is that of Conserved oligomeric Golgi complex subunit 4 from Arabidopsis thaliana (Mouse-ear cress).